Consider the following 142-residue polypeptide: Small ribosomal subunit protein bS6 (142 aa).

A disordered region spans residues 110–142 (NKKPSHAKEKHEKTEHAHSHHTEEAGSKESHSE).

Belongs to the bacterial ribosomal protein bS6 family.

Binds together with bS18 to 16S ribosomal RNA. The sequence is that of Small ribosomal subunit protein bS6 from Helicobacter acinonychis (strain Sheeba).